Here is a 290-residue protein sequence, read N- to C-terminus: Cbb3-type cytochrome c oxidase subunit FixP (290 aa).

A helical transmembrane segment spans residues 33–53 (WWVITFYITIVWAIGYWIVYP). Cytochrome c domains lie at 109-198 (LARA…RSLS) and 206-287 (YDAA…HSLG). Heme c-binding residues include cysteine 122, cysteine 125, histidine 126, methionine 173, cysteine 219, cysteine 222, histidine 223, and methionine 264.

It belongs to the CcoP / FixP family. Component of the cbb3-type cytochrome c oxidase at least composed of FixN, FixO, FixQ and FixP. Requires heme c as cofactor.

Its subcellular location is the cell inner membrane. It participates in energy metabolism; oxidative phosphorylation. Its function is as follows. C-type cytochrome. Part of the cbb3-type cytochrome c oxidase complex. FixP subunit is required for transferring electrons from donor cytochrome c via its heme groups to FixO subunit. From there, electrons are shuttled to the catalytic binuclear center of FixN subunit where oxygen reduction takes place. The complex also functions as a proton pump. The polypeptide is Cbb3-type cytochrome c oxidase subunit FixP (Bradyrhizobium sp. (strain ORS 278)).